Consider the following 302-residue polypeptide: Ornithine carbamoyltransferase (302 aa).

Carbamoyl phosphate is bound by residues 52-55 (STRT), Q79, R103, and 130-133 (HPCQ). L-ornithine is bound by residues N161, D221, and 225–226 (SM). Carbamoyl phosphate contacts are provided by residues 261 to 262 (CL) and R289.

It belongs to the aspartate/ornithine carbamoyltransferase superfamily. OTCase family.

The protein resides in the cytoplasm. The catalysed reaction is carbamoyl phosphate + L-ornithine = L-citrulline + phosphate + H(+). It functions in the pathway amino-acid biosynthesis; L-arginine biosynthesis; L-arginine from L-ornithine and carbamoyl phosphate: step 1/3. Functionally, reversibly catalyzes the transfer of the carbamoyl group from carbamoyl phosphate (CP) to the N(epsilon) atom of ornithine (ORN) to produce L-citrulline. This chain is Ornithine carbamoyltransferase, found in Methanospirillum hungatei JF-1 (strain ATCC 27890 / DSM 864 / NBRC 100397 / JF-1).